A 428-amino-acid chain; its full sequence is Glutamate-1-semialdehyde 2,1-aminomutase (428 aa).

At Lys265 the chain carries N6-(pyridoxal phosphate)lysine.

The protein belongs to the class-III pyridoxal-phosphate-dependent aminotransferase family. HemL subfamily. Homodimer. Requires pyridoxal 5'-phosphate as cofactor.

It is found in the cytoplasm. The enzyme catalyses (S)-4-amino-5-oxopentanoate = 5-aminolevulinate. It participates in porphyrin-containing compound metabolism; protoporphyrin-IX biosynthesis; 5-aminolevulinate from L-glutamyl-tRNA(Glu): step 2/2. The sequence is that of Glutamate-1-semialdehyde 2,1-aminomutase from Aeromonas salmonicida (strain A449).